The following is a 730-amino-acid chain: Diacylglycerol kinase alpha (730 aa).

EF-hand domains are found at residues 111–146 (RPEDKLEFTFKLYDMDRNGILDSTEVEKIILQMMRV) and 156–191 (ELRPILQEMMREMDQDGSGSVSLDEWVRAGATTVPL). The Ca(2+) site is built by Asp-124, Asp-126, Asn-128, Glu-135, Asp-169, Asp-171, Ser-173, Ser-175, and Glu-180. Phorbol-ester/DAG-type zinc fingers lie at residues 206–254 (NHIW…AQPC) and 270–320 (SHLW…GPEC). One can recognise a DAGKc domain in the interval 368–501 (SNTHPLLVFI…LDRWFLEVIP (134 aa)). At Lys-479 the chain carries N6-acetyllysine.

Belongs to the eukaryotic diacylglycerol kinase family. As to quaternary structure, monomer.

Its subcellular location is the cytoplasm. It is found in the cytosol. The enzyme catalyses a 1,2-diacyl-sn-glycerol + ATP = a 1,2-diacyl-sn-glycero-3-phosphate + ADP + H(+). The catalysed reaction is a 1-O-alkyl-sn-glycerol + ATP = a 1-O-alkyl-sn-glycero-3-phosphate + ADP + H(+). It catalyses the reaction 1-O-alkyl-2-acyl-sn-glycerol + ATP = 1-O-alkyl-2-acyl-sn-glycero-3-phosphate + ADP + H(+). It carries out the reaction 1,2-dihexadecanoyl-sn-glycerol + ATP = 1,2-dihexadecanoyl-sn-glycero-3-phosphate + ADP + H(+). The enzyme catalyses 1-hexadecanoyl-2-(9Z-octadecenoyl)-sn-glycerol + ATP = 1-hexadecanoyl-2-(9Z-octadecenoyl)-sn-glycero-3-phosphate + ADP + H(+). The catalysed reaction is 2-(9Z-octadecenoyl)-glycerol + ATP = 2-(9Z-octadecenoyl)-sn-glycero-3-phosphate + ADP + H(+). It catalyses the reaction 1,2-di-(9Z-octadecenoyl)-sn-glycerol + ATP = 1,2-di-(9Z-octadecenoyl)-sn-glycero-3-phosphate + ADP + H(+). It carries out the reaction 1-octadecanoyl-2-(5Z,8Z,11Z,14Z-eicosatetraenoyl)-sn-glycerol + ATP = 1-octadecanoyl-2-(5Z,8Z,11Z,14Z-eicosatetraenoyl)-sn-glycero-3-phosphate + ADP + H(+). The enzyme catalyses 1,2-didecanoyl-sn-glycerol + ATP = 1,2-didecanoyl-sn-glycero-3-phosphate + ADP + H(+). The catalysed reaction is 1-O-hexadecyl-2-acetyl-sn-glycerol + ATP = 1-O-hexadecyl-2-acetyl-sn-glycero-3-phosphate + ADP + H(+). It catalyses the reaction 1-O-hexadecyl-2-(5Z,8Z,11Z,14Z-eicosatetraenoyl)-sn-glycerol + ATP = 1-O-hexadecyl-2-(5Z,8Z,11Z,14Z-eicosatetraenoyl)-sn-glycero-3-phosphate + ADP + H(+). It carries out the reaction 1-O-hexadecyl-2-(9Z-octadecenoyl)-sn-glycerol + ATP = 1-O-hexadecyl-2-(9Z-octadecenoyl)-sn-glycero-3-phosphate + ADP + H(+). The enzyme catalyses 1-O-hexadecyl-sn-glycerol + ATP = 1-O-hexadecyl-sn-glycero-3-phosphate + ADP + H(+). The protein operates within lipid metabolism; glycerolipid metabolism. With respect to regulation, stimulated by calcium and phosphatidylserine. Its function is as follows. Diacylglycerol kinase that converts diacylglycerol/DAG into phosphatidic acid/phosphatidate/PA and regulates the respective levels of these two bioactive lipids. Thereby, acts as a central switch between the signaling pathways activated by these second messengers with different cellular targets and opposite effects in numerous biological processes. Also plays an important role in the biosynthesis of complex lipids. Can also phosphorylate 1-alkyl-2-acylglycerol in vitro as efficiently as diacylglycerol provided it contains an arachidonoyl group. Also involved in the production of alkyl-lysophosphatidic acid, another bioactive lipid, through the phosphorylation of 1-alkyl-2-acetyl glycerol. The chain is Diacylglycerol kinase alpha (Dgka) from Mus musculus (Mouse).